A 368-amino-acid chain; its full sequence is Isopentenyl-diphosphate delta-isomerase (368 aa).

Position 7–8 (7–8) interacts with substrate; it reads RK. FMN contacts are provided by residues threonine 65, 66 to 68, serine 96, and asparagine 125; that span reads GMT. Residue 96 to 98 coordinates substrate; the sequence is SQR. Glutamine 160 contacts substrate. Position 161 (glutamate 161) interacts with Mg(2+). FMN-binding positions include lysine 193, serine 218, threonine 223, 275 to 277, and 296 to 297; these read GIR and AL.

The protein belongs to the IPP isomerase type 2 family. In terms of assembly, homooctamer. Dimer of tetramers. Requires FMN as cofactor. The cofactor is NADPH. Mg(2+) serves as cofactor.

It is found in the cytoplasm. It carries out the reaction isopentenyl diphosphate = dimethylallyl diphosphate. Functionally, involved in the biosynthesis of isoprenoids. Catalyzes the 1,3-allylic rearrangement of the homoallylic substrate isopentenyl (IPP) to its allylic isomer, dimethylallyl diphosphate (DMAPP). This Saccharolobus islandicus (strain L.S.2.15 / Lassen #1) (Sulfolobus islandicus) protein is Isopentenyl-diphosphate delta-isomerase.